Reading from the N-terminus, the 233-residue chain is DNA repair protein RecO (233 aa).

It belongs to the RecO family.

Functionally, involved in DNA repair and RecF pathway recombination. This chain is DNA repair protein RecO, found in Pseudomonas paraeruginosa (strain DSM 24068 / PA7) (Pseudomonas aeruginosa (strain PA7)).